Reading from the N-terminus, the 439-residue chain is Proline--tRNA ligase (439 aa).

It belongs to the class-II aminoacyl-tRNA synthetase family. ProS type 2 subfamily. Homodimer.

It localises to the cytoplasm. It carries out the reaction tRNA(Pro) + L-proline + ATP = L-prolyl-tRNA(Pro) + AMP + diphosphate. In terms of biological role, catalyzes the attachment of proline to tRNA(Pro) in a two-step reaction: proline is first activated by ATP to form Pro-AMP and then transferred to the acceptor end of tRNA(Pro). In Phenylobacterium zucineum (strain HLK1), this protein is Proline--tRNA ligase.